A 518-amino-acid polypeptide reads, in one-letter code: Putative cytochrome P450 CYP13A7 (518 aa).

Cysteine 464 provides a ligand contact to heme.

The protein belongs to the cytochrome P450 family. The cofactor is heme.

Cytochromes P450 are a group of heme-thiolate monooxygenases. They oxidize a variety of structurally unrelated compounds, including steroids, fatty acids, and xenobiotics. In Caenorhabditis elegans, this protein is Putative cytochrome P450 CYP13A7 (cyp-13A7).